Consider the following 197-residue polypeptide: Adenylate kinase (197 aa).

16-21 (GAGKGT) is an ATP binding site. The interval 36–65 (STGDILRDHVARGTALGQQAGPLMEAGQLV) is NMP. Residues T37, R42, 63-65 (QLV), 90-93 (GFPR), and Q97 each bind AMP. Positions 131-147 (DRGRQAVAEGRAPRADD) are LID. R132 provides a ligand contact to ATP. Residues 137–158 (VAEGRAPRADDNEETARKRQQV) form a disordered region. A compositionally biased stretch (basic and acidic residues) spans 141-153 (RAPRADDNEETAR). Residues R144 and R155 each coordinate AMP. ATP is bound at residue G183.

It belongs to the adenylate kinase family. In terms of assembly, monomer.

It localises to the cytoplasm. The enzyme catalyses AMP + ATP = 2 ADP. It participates in purine metabolism; AMP biosynthesis via salvage pathway; AMP from ADP: step 1/1. Its function is as follows. Catalyzes the reversible transfer of the terminal phosphate group between ATP and AMP. Plays an important role in cellular energy homeostasis and in adenine nucleotide metabolism. The chain is Adenylate kinase from Deinococcus radiodurans (strain ATCC 13939 / DSM 20539 / JCM 16871 / CCUG 27074 / LMG 4051 / NBRC 15346 / NCIMB 9279 / VKM B-1422 / R1).